The following is a 470-amino-acid chain: GDP-Man:Man(3)GlcNAc(2)-PP-Dol alpha-1,2-mannosyltransferase (470 aa).

At 1 to 15 the chain is on the lumenal side; that stretch reads MSDTVISLISHSITT. The chain crosses the membrane as a helical span at residues 16-36; it reads VFYLVPLIIALIIPFSLYSGF. Residues 37–131 are Cytoplasmic-facing; sequence RRKSKTVAFF…HYKHCTMLFQ (95 aa). Positions 132-152 form an intramembrane region, helical; the sequence is ALAGLILALEAWFRMVPAVFI. Residues 153 to 378 are Cytoplasmic-facing; sequence DSMGYPLSLP…ISIHTMHNEH (226 aa). The segment at residues 379–399 is an intramembrane region (helical); it reads FGISVVEAMAASTIILSNDSG. Residues 400-470 are Cytoplasmic-facing; that stretch reads GPRMDIVKDY…HWNKEIEKVL (71 aa).

Belongs to the glycosyltransferase group 1 family. Glycosyltransferase 4 subfamily.

The protein resides in the endoplasmic reticulum membrane. It catalyses the reaction an alpha-D-Man-(1-&gt;3)-[alpha-D-Man-(1-&gt;6)]-beta-D-Man-(1-&gt;4)-beta-D-GlcNAc-(1-&gt;4)-alpha-D-GlcNAc-diphospho-di-trans,poly-cis-dolichol + 2 GDP-alpha-D-mannose = an alpha-D-Man-(1-&gt;2)-alpha-D-Man-(1-&gt;2)-alpha-D-Man-(1-&gt;3)-[alpha-D-Man-(1-&gt;6)]-beta-D-Man-(1-&gt;4)-beta-D-GlcNAc-(1-&gt;4)-alpha-D-GlcNAc-diphospho-di-trans,poly-cis-dolichol + 2 GDP + 2 H(+). It participates in protein modification; protein glycosylation. In terms of biological role, GDP-Man:Man(3)GlcNAc(2)-PP-Dol alpha-1,2-mannosyltransferase that operates in the biosynthetic pathway of dolichol-linked oligosaccharides, the glycan precursors employed in protein asparagine (N)-glycosylation. The assembly of dolichol-linked oligosaccharides begins on the cytosolic side of the endoplasmic reticulum membrane and finishes in its lumen. The sequential addition of sugars to dolichol pyrophosphate produces dolichol-linked oligosaccharides containing fourteen sugars, including two GlcNAcs, nine mannoses and three glucoses. Once assembled, the oligosaccharide is transferred from the lipid to nascent proteins by oligosaccharyltransferases. Catalyzes, on the cytoplasmic face of the endoplasmic reticulum, the addition of the fourth and fifth mannose residues to the dolichol-linked oligosaccharide chain, to produce Man(5)GlcNAc(2)-PP-dolichol core oligosaccharide. Man(5)GlcNAc(2)-PP-dolichol is a substrate for ALG3, the following enzyme in the biosynthetic pathway. In Caenorhabditis elegans, this protein is GDP-Man:Man(3)GlcNAc(2)-PP-Dol alpha-1,2-mannosyltransferase.